The following is a 368-amino-acid chain: MDAIRKQASRLREQVARQQQAVFKQFGGGGYGSGLADEAELNQHQKLEKLYISTRAAKHYQRDIVRGVEGYIVTGSKQVEIGTKLSEDSRKYGSENTCTNGNVLTRAALNYGRARAQMEKERGNMLKALGTQVAEPLRAMVLGAPLEDARHLAQRYDRMRQEAEAQATEVARRQAKARESQGNPDILMKLESAEAKLHDLKSNMTILGKEAASALASVEDQQQKLTLERLLSMVESERAYHQRVLQILDQLEGEMVSERQRIEAPSTPSSADSMPPPPSYEEANGVFASQMHDTSTDSMGYFLGEVLFPYHGVTDVELSLSTGEYVVVRKVTGSGWAEGECKGKAGWFPYGYIERRERVLASKVSEVF.

2 coiled-coil regions span residues 1 to 21 (MDAIRKQASRLREQVARQQQA) and 146 to 210 (LEDA…LGKE). The region spanning 1 to 264 (MDAIRKQASR…MVSERQRIEA (264 aa)) is the BAR domain. The disordered stretch occupies residues 258-281 (ERQRIEAPSTPSSADSMPPPPSYE). Residues 299 to 358 (MGYFLGEVLFPYHGVTDVELSLSTGEYVVVRKVTGSGWAEGECKGKAGWFPYGYIERRER) form the SH3 domain.

Homodimer. Interacts with FREE1. Interacts (via SH3 domain) with ATG8E and ATG8F. Component of a phosphoinositide 3-kinase (PI3K) complex containing ATG6, SH3P2 and FREE1. Binds to SH3P3 and DRP1A. Forms a complex made of SH3P2 and DRP1A and triggers its accumulation at the cell plate. Highly expressed in seedlings. Detected in flowers, leaves and stems.

The protein resides in the cytoplasm. Its subcellular location is the cytoplasmic vesicle. It localises to the clathrin-coated vesicle. The protein localises to the cell membrane. It is found in the late endosome. The protein resides in the autophagosome membrane. Its function is as follows. Regulator for autophaosome formation and/or maturation. Binds phosphatidylinositol-phosphate; highest affinity for vesicles containing PtdIns(3,4,5)P(3), followed by those containing PtdIns(4,5)P(2) and PtdIns(3,4)P(2), with minimal binding to phosphatidylinositol monophosphates, including PtdIns(3)P. Together with DRP1A, converts the fused vesicles to tubular structures at the cell plate during cytokinesis. This Arabidopsis thaliana (Mouse-ear cress) protein is SH3 domain-containing protein 2.